We begin with the raw amino-acid sequence, 365 residues long: 2-aminoethylphosphonate--pyruvate transaminase (365 aa).

Lysine 194 carries the N6-(pyridoxal phosphate)lysine modification.

This sequence belongs to the class-V pyridoxal-phosphate-dependent aminotransferase family. PhnW subfamily. Homodimer. It depends on pyridoxal 5'-phosphate as a cofactor.

It catalyses the reaction (2-aminoethyl)phosphonate + pyruvate = phosphonoacetaldehyde + L-alanine. Its function is as follows. Involved in phosphonate degradation. In Bacillus cereus (strain ATCC 14579 / DSM 31 / CCUG 7414 / JCM 2152 / NBRC 15305 / NCIMB 9373 / NCTC 2599 / NRRL B-3711), this protein is 2-aminoethylphosphonate--pyruvate transaminase.